Here is a 156-residue protein sequence, read N- to C-terminus: Arginine repressor (156 aa).

It belongs to the ArgR family.

The protein resides in the cytoplasm. It participates in amino-acid biosynthesis; L-arginine biosynthesis [regulation]. Its function is as follows. Regulates arginine biosynthesis genes. The protein is Arginine repressor of Edwardsiella ictaluri (strain 93-146).